We begin with the raw amino-acid sequence, 272 residues long: MMVVCAAAAVRFLAVFTMMALCSLPLLGASATLNSVLINSNAIKNLPPPLGGAGGQPGSAVSVAPGVLYEGGNKYQTLDNYQPYPCAEDEECGSDEYCSSPSRGAAGVGGVQICLACRKRRKRCMRHAMCCPGNYCKNGICMPSDHSHFPRGEIEESIIENLGNDHNAAAGDGYPRRTTLTSKIYHTKGQEGSVCLRSSDCAAGLCCARHFWSKICKPVLKEGQVCTKHKRKGSHGLEIFQRCYCGEGLACRIQKDHHQASNSSRLHTCQRH.

The signal sequence occupies residues 1 to 31 (MMVVCAAAAVRFLAVFTMMALCSLPLLGASA). An O-linked (GalNAc...) serine glycan is attached at Ser-62. Cystine bridges form between Cys-86/Cys-98, Cys-92/Cys-114, Cys-117/Cys-131, Cys-124/Cys-136, Cys-130/Cys-141, Cys-195/Cys-207, Cys-201/Cys-216, Cys-206/Cys-243, Cys-226/Cys-251, and Cys-245/Cys-269. Residues 86 to 141 (CAEDEECGSDEYCSSPSRGAAGVGGVQICLACRKRRKRCMRHAMCCPGNYCKNGIC) are DKK-type Cys-1. The DKK-type Cys-2 stretch occupies residues 195-269 (CLRSSDCAAG…ASNSSRLHTC (75 aa)). An N-linked (GlcNAc...) asparagine glycan is attached at Asn-262.

This sequence belongs to the dickkopf family. In terms of assembly, interacts (via the C-terminal Cys-rich domain) with LRP5 (via beta-propeller regions 3 and 4); the interaction, enhanced by MESD and or KREMEN, antagonizes Wnt-mediated signaling. Interacts with LRP6. Forms a ternary complex with LRP6 and KREM1. Interacts with KREM1.

It is found in the secreted. Antagonizes canonical Wnt signaling by inhibiting LRP5/6 interaction with Wnt and by forming a ternary complex with the transmembrane protein KREMEN that promotes internalization of LRP5/6. Inhibits the pro-apoptotic function of KREMEN1 in a Wnt-independent manner, and has anti-apoptotic activity. Plays a role in limb development; attenuates Wnt signaling in the developing limb to allow normal limb patterning. This chain is Dickkopf-related protein 1 (Dkk1), found in Mus musculus (Mouse).